Reading from the N-terminus, the 254-residue chain is ATP-dependent L-serine kinase SbnI (254 aa).

E20 is an active-site residue. S33 lines the ADP pocket. I57 serves as a coordination point for O-phospho-L-serine. D58, G59, H61, and R62 together coordinate ADP. The O-phospho-L-serine site is built by G59 and H61. W98 and R229 together coordinate O-phospho-L-serine.

Forms dimers and tetramers in solution. Predominantly forms dimers. Dimerization/oligomerization is not essential for kinase activity.

The catalysed reaction is L-serine + ATP = O-phospho-L-serine + ADP + H(+). The protein operates within siderophore biosynthesis. Binds heme and heme binding inhibits DNA binding. Its function is as follows. Free serine kinase that uses ATP to phosphorylate L-serine to yield O-phospho-L-serine and ADP. O-phospho-L-serine serves as a substrate for SbnA and is a precursor for staphyloferrin B biosynthesis. Is also a DNA-binding regulatory protein that senses heme to control gene expression for siderophore biosynthesis. Binds to DNA within the sbnC coding region and is required for expression of genes in the sbn operon from sbnD onward. The polypeptide is ATP-dependent L-serine kinase SbnI (Staphylococcus aureus (strain NCTC 8325 / PS 47)).